We begin with the raw amino-acid sequence, 335 residues long: UDP-N-acetylenolpyruvoylglucosamine reductase 1 (335 aa).

In terms of domain architecture, FAD-binding PCMH-type spans 36–202 (RIGGPAAVFA…LEVELLLKPG (167 aa)). The active site involves R181. S231 functions as the Proton donor in the catalytic mechanism. Residue E306 is part of the active site.

The protein belongs to the MurB family. FAD is required as a cofactor.

The protein localises to the cytoplasm. The enzyme catalyses UDP-N-acetyl-alpha-D-muramate + NADP(+) = UDP-N-acetyl-3-O-(1-carboxyvinyl)-alpha-D-glucosamine + NADPH + H(+). Its pathway is cell wall biogenesis; peptidoglycan biosynthesis. Its function is as follows. Cell wall formation. This is UDP-N-acetylenolpyruvoylglucosamine reductase 1 (murB1) from Corynebacterium glutamicum (strain ATCC 13032 / DSM 20300 / JCM 1318 / BCRC 11384 / CCUG 27702 / LMG 3730 / NBRC 12168 / NCIMB 10025 / NRRL B-2784 / 534).